A 231-amino-acid chain; its full sequence is Probable cell wall protein ARB_06477 (231 aa).

Positions 1 to 17 (MRSVLYLLFTAVAAVAA) are cleaved as a signal peptide. The disordered stretch occupies residues 107-206 (TPSFMVDGAT…TGMPTSSGAP (100 aa)). Positions 121–204 (TGPTTSRTSM…SSTGMPTSSG (84 aa)) are enriched in low complexity. Ser-203 is lipidated: GPI-anchor amidated serine. Residues 204–231 (GAPDPNGAVSLALPGGLLSIVLSLMALL) constitute a propeptide, removed in mature form.

This sequence belongs to the SRP1/TIP1 family. Post-translationally, the GPI-anchor is attached to the protein in the endoplasmic reticulum and serves to target the protein to the cell surface. There, the glucosamine-inositol phospholipid moiety is cleaved off and the GPI-modified mannoprotein is covalently attached via its lipidless GPI glycan remnant to the 1,6-beta-glucan of the outer cell wall layer.

It localises to the cell membrane. Its subcellular location is the secreted. It is found in the cell wall. Its function is as follows. Probable component of the cell wall. This is Probable cell wall protein ARB_06477 from Arthroderma benhamiae (strain ATCC MYA-4681 / CBS 112371) (Trichophyton mentagrophytes).